Consider the following 67-residue polypeptide: DNA-directed RNA polymerases I, II, and III subunit RPABC5 (67 aa).

Zn(2+) is bound by residues C7, C10, C44, and C45.

It belongs to the archaeal Rpo10/eukaryotic RPB10 RNA polymerase subunit family. In terms of assembly, component of the RNA polymerase I (Pol I), RNA polymerase II (Pol II) and RNA polymerase III (Pol III) complexes consisting of at least 13, 12 and 17 subunits, respectively.

It is found in the nucleus. DNA-dependent RNA polymerase catalyzes the transcription of DNA into RNA using the four ribonucleoside triphosphates as substrates. Common component of RNA polymerases I, II and III which synthesize ribosomal RNA precursors, mRNA precursors and many functional non-coding RNAs, and a small RNAs, such as 5S rRNA and tRNAs, respectively. Pol II is the central component of the basal RNA polymerase II transcription machinery. Pols are composed of mobile elements that move relative to each other. In Pol II, RBP10 is part of the core element with the central large cleft. In Caenorhabditis briggsae, this protein is DNA-directed RNA polymerases I, II, and III subunit RPABC5.